The following is a 495-amino-acid chain: Glycerol kinase (495 aa).

Position 12 (T12) interacts with ADP. Residues T12, T13, and S14 each contribute to the ATP site. T12 serves as a coordination point for sn-glycerol 3-phosphate. Residue R16 participates in ADP binding. The sn-glycerol 3-phosphate site is built by R82, E83, Y134, and D243. Residues R82, E83, Y134, D243, and Q244 each coordinate glycerol. ADP contacts are provided by T265 and G308. T265, G308, Q312, and G409 together coordinate ATP. Positions 409 and 413 each coordinate ADP.

This sequence belongs to the FGGY kinase family.

The catalysed reaction is glycerol + ATP = sn-glycerol 3-phosphate + ADP + H(+). Its pathway is polyol metabolism; glycerol degradation via glycerol kinase pathway; sn-glycerol 3-phosphate from glycerol: step 1/1. Inhibited by fructose 1,6-bisphosphate (FBP). In terms of biological role, key enzyme in the regulation of glycerol uptake and metabolism. Catalyzes the phosphorylation of glycerol to yield sn-glycerol 3-phosphate. This Ectopseudomonas mendocina (strain ymp) (Pseudomonas mendocina) protein is Glycerol kinase.